The primary structure comprises 612 residues: Dihydroxy-acid dehydratase (612 aa).

Asp81 lines the Mg(2+) pocket. Cys122 serves as a coordination point for [2Fe-2S] cluster. Asp123 and Lys124 together coordinate Mg(2+). Position 124 is an N6-carboxylysine (Lys124). Residue Cys193 coordinates [2Fe-2S] cluster. Glu489 contributes to the Mg(2+) binding site. Residue Ser515 is the Proton acceptor of the active site.

The protein belongs to the IlvD/Edd family. In terms of assembly, homodimer. The cofactor is [2Fe-2S] cluster. Mg(2+) serves as cofactor.

The enzyme catalyses (2R)-2,3-dihydroxy-3-methylbutanoate = 3-methyl-2-oxobutanoate + H2O. It catalyses the reaction (2R,3R)-2,3-dihydroxy-3-methylpentanoate = (S)-3-methyl-2-oxopentanoate + H2O. Its pathway is amino-acid biosynthesis; L-isoleucine biosynthesis; L-isoleucine from 2-oxobutanoate: step 3/4. It functions in the pathway amino-acid biosynthesis; L-valine biosynthesis; L-valine from pyruvate: step 3/4. Its function is as follows. Functions in the biosynthesis of branched-chain amino acids. Catalyzes the dehydration of (2R,3R)-2,3-dihydroxy-3-methylpentanoate (2,3-dihydroxy-3-methylvalerate) into 2-oxo-3-methylpentanoate (2-oxo-3-methylvalerate) and of (2R)-2,3-dihydroxy-3-methylbutanoate (2,3-dihydroxyisovalerate) into 2-oxo-3-methylbutanoate (2-oxoisovalerate), the penultimate precursor to L-isoleucine and L-valine, respectively. The chain is Dihydroxy-acid dehydratase from Azotobacter vinelandii (strain DJ / ATCC BAA-1303).